The chain runs to 357 residues: NADH-quinone oxidoreductase subunit H (357 aa).

The next 8 helical transmembrane spans lie at Val-22–Val-42, Ile-94–Val-114, Leu-130–Ala-150, Ala-164–Ile-184, Gly-199–Ser-219, Phe-254–Phe-274, Ile-294–Val-314, and Val-333–Leu-353.

This sequence belongs to the complex I subunit 1 family. In terms of assembly, NDH-1 is composed of 14 different subunits. Subunits NuoA, H, J, K, L, M, N constitute the membrane sector of the complex.

It is found in the cell inner membrane. The enzyme catalyses a quinone + NADH + 5 H(+)(in) = a quinol + NAD(+) + 4 H(+)(out). Its function is as follows. NDH-1 shuttles electrons from NADH, via FMN and iron-sulfur (Fe-S) centers, to quinones in the respiratory chain. The immediate electron acceptor for the enzyme in this species is believed to be ubiquinone. Couples the redox reaction to proton translocation (for every two electrons transferred, four hydrogen ions are translocated across the cytoplasmic membrane), and thus conserves the redox energy in a proton gradient. This subunit may bind ubiquinone. The polypeptide is NADH-quinone oxidoreductase subunit H (Vesicomyosocius okutanii subsp. Calyptogena okutanii (strain HA)).